Here is a 432-residue protein sequence, read N- to C-terminus: D-amino acid dehydrogenase (432 aa).

Valine 3–tryptophan 17 lines the FAD pocket.

It belongs to the DadA oxidoreductase family. The cofactor is FAD.

It catalyses the reaction a D-alpha-amino acid + A + H2O = a 2-oxocarboxylate + AH2 + NH4(+). Its pathway is amino-acid degradation; D-alanine degradation; NH(3) and pyruvate from D-alanine: step 1/1. Oxidative deamination of D-amino acids. The sequence is that of D-amino acid dehydrogenase from Shigella boydii serotype 4 (strain Sb227).